Reading from the N-terminus, the 314-residue chain is MLDFEKPLFEIRNKIESLKESQDKNDVDLQEEIDMLEASLERETKKIYTNLKPWDRVQIARLQERPTTLDYIPYIFDSFMELHGDRNFRDDPAMIGGIGFLNGRAVTVIGQQRGKDTKDNIYRNFGMAHPEGYRKALRLMKQAEKFNRPIFTFIDTKGAYPGKAAEERGQSESIATNLIEMASLKVPVIAIVIGEGGSGGALGIGIANKVLMLENSTYSVISPEGAAALLWKDSNLAKIAAETMKITAHDIKQLGIIDDVISEPLGGAHKDVEQQALAIKSAFVAQLDSLESLSRDEIANDRFEKFRNIGSYIE.

One can recognise a CoA carboxyltransferase C-terminal domain in the interval 32–289; it reads EIDMLEASLE…KSAFVAQLDS (258 aa).

This sequence belongs to the AccA family. In terms of assembly, acetyl-CoA carboxylase is a heterohexamer composed of biotin carboxyl carrier protein (AccB), biotin carboxylase (AccC) and two subunits each of ACCase subunit alpha (AccA) and ACCase subunit beta (AccD).

Its subcellular location is the cytoplasm. It catalyses the reaction N(6)-carboxybiotinyl-L-lysyl-[protein] + acetyl-CoA = N(6)-biotinyl-L-lysyl-[protein] + malonyl-CoA. It functions in the pathway lipid metabolism; malonyl-CoA biosynthesis; malonyl-CoA from acetyl-CoA: step 1/1. Functionally, component of the acetyl coenzyme A carboxylase (ACC) complex. First, biotin carboxylase catalyzes the carboxylation of biotin on its carrier protein (BCCP) and then the CO(2) group is transferred by the carboxyltransferase to acetyl-CoA to form malonyl-CoA. This chain is Acetyl-coenzyme A carboxylase carboxyl transferase subunit alpha, found in Staphylococcus aureus (strain JH9).